We begin with the raw amino-acid sequence, 449 residues long: Glutamyl-tRNA reductase (449 aa).

Substrate is bound by residues 58-61, Ser-121, 126-128, and Gln-132; these read TCNR and ETQ. Cys-59 acts as the Nucleophile in catalysis. 203–208 provides a ligand contact to NADP(+); sequence GLGEMA.

It belongs to the glutamyl-tRNA reductase family. As to quaternary structure, homodimer.

The enzyme catalyses (S)-4-amino-5-oxopentanoate + tRNA(Glu) + NADP(+) = L-glutamyl-tRNA(Glu) + NADPH + H(+). The protein operates within porphyrin-containing compound metabolism; protoporphyrin-IX biosynthesis; 5-aminolevulinate from L-glutamyl-tRNA(Glu): step 1/2. In terms of biological role, catalyzes the NADPH-dependent reduction of glutamyl-tRNA(Glu) to glutamate 1-semialdehyde (GSA). In Helicobacter pylori (strain P12), this protein is Glutamyl-tRNA reductase.